The chain runs to 204 residues: MSAIDKLVKASHLIDMNDIIREGNPTLRKVAEEVTFPLSEKEEILGEKMMQFLKHSQDPIMAEKLGLRGGVGLAAPQLDISKRIIAVLVPNVEDAQGNPPKEAYSLQEVMYNPKVVSHSVQDAALSDGEGCLSVDREVPGYVVRHARVTIEYFDKTGEKHRLKLKGYNSIVVQHEIDHIDGIMFYDRINEKNPFAVKEGLLILE.

Fe cation-binding residues include Cys131 and His174. Glu175 is a catalytic residue. His178 is a Fe cation binding site.

The protein belongs to the polypeptide deformylase family. The cofactor is Fe(2+).

It carries out the reaction N-terminal N-formyl-L-methionyl-[peptide] + H2O = N-terminal L-methionyl-[peptide] + formate. In terms of biological role, removes the formyl group from the N-terminal Met of newly synthesized proteins. Requires at least a dipeptide for an efficient rate of reaction. N-terminal L-methionine is a prerequisite for activity but the enzyme has broad specificity at other positions. The chain is Peptide deformylase from Streptococcus agalactiae serotype III (strain NEM316).